Reading from the N-terminus, the 103-residue chain is UPF0145 protein Amet_0532 (103 aa).

The protein belongs to the UPF0145 family.

The chain is UPF0145 protein Amet_0532 from Alkaliphilus metalliredigens (strain QYMF).